A 330-amino-acid chain; its full sequence is GTPase Obg (330 aa).

One can recognise an Obg domain in the interval 1 to 159; sequence MQFIDQARIT…WPLQLELKLL (159 aa). The 169-residue stretch at 160 to 328 folds into the OBG-type G domain; sequence AEVGIIGLPN…LLERVWKELG (169 aa). Residues 166 to 173, 191 to 195, 213 to 216, 280 to 283, and 309 to 311 each bind ATP; these read GLPNAGKS, FTTLV, DIPG, NKQE, and SAA. Mg(2+) is bound by residues Ser-173 and Thr-193.

Belongs to the TRAFAC class OBG-HflX-like GTPase superfamily. OBG GTPase family. Monomer. It depends on Mg(2+) as a cofactor.

It is found in the cytoplasm. Functionally, an essential GTPase which binds GTP, GDP and possibly (p)ppGpp with moderate affinity, with high nucleotide exchange rates and a fairly low GTP hydrolysis rate. Plays a role in control of the cell cycle, stress response, ribosome biogenesis and in those bacteria that undergo differentiation, in morphogenesis control. This chain is GTPase Obg, found in Parasynechococcus marenigrum (strain WH8102).